We begin with the raw amino-acid sequence, 327 residues long: 2-keto-3-deoxygluconate permease (327 aa).

Helical transmembrane passes span 10–30 (IPGGMMLVPLFLGALCHTFSP), 42–62 (GMITGTVPILAVWFFCMGASI), 73–93 (KSGTLVVTKIAVAWVVAAIAS), 95–115 (IIPEHGVEVGFFAGLSTLALV), 139–159 (AGAFVLMSLESGPLMTMIILG), 163–183 (IASFEPHVFVGAVLPFLVGFA), 199–219 (VQTLIPFFAFALGNTIDLTVI), 224–244 (LLGILLGVAVIIVTGIPLIIA), 254–274 (TAGIAASSSAGAAVATPVLIA), and 289–309 (SLVATAVIVTSILVPILTSIW).

Belongs to the KdgT transporter family.

It is found in the cell inner membrane. It catalyses the reaction 2-dehydro-3-deoxy-D-gluconate(in) + H(+)(in) = 2-dehydro-3-deoxy-D-gluconate(out) + H(+)(out). In terms of biological role, catalyzes the proton-dependent uptake of 2-keto-3-deoxygluconate (KDG) into the cell. The polypeptide is 2-keto-3-deoxygluconate permease (Escherichia coli O7:K1 (strain IAI39 / ExPEC)).